The primary structure comprises 132 residues: C-glycoside deglycosidase beta subunit (132 aa).

The protein belongs to the C-glycoside deglycosidase beta subunit family. In terms of assembly, heterodimer composed of an alpha subunit (CarB2) and a beta subunit (CarC2). A divalent metal cation is required as a cofactor.

The catalysed reaction is 3''-dehydroorientin = 1,5-anhydro-D-erythro-hex-1-en-3-ulose + luteolin. Its activity is regulated as follows. Activity is strongly reduced in the presence of chelating agents. Carbon-carbon bond-cleaving enzyme which participates in the metabolism of C-glycosides. Acts on the C8-glycosylated compound 3''-dehydroorientin (3''-oxo-orientin). The protein is C-glycoside deglycosidase beta subunit of Arthrobacter globiformis (strain ATCC 8010 / DSM 20124 / JCM 1332 / NBRC 12137 / NCIMB 8907 / NRRL B-2979 / 168).